A 345-amino-acid polypeptide reads, in one-letter code: Ferrochelatase (345 aa).

2 residues coordinate Fe cation: H215 and E296.

It belongs to the ferrochelatase family.

It localises to the cytoplasm. The catalysed reaction is heme b + 2 H(+) = protoporphyrin IX + Fe(2+). Its pathway is porphyrin-containing compound metabolism; protoheme biosynthesis; protoheme from protoporphyrin-IX: step 1/1. Functionally, catalyzes the ferrous insertion into protoporphyrin IX. The sequence is that of Ferrochelatase from Rhodopseudomonas palustris (strain TIE-1).